Here is a 563-residue protein sequence, read N- to C-terminus: CDKN2A-interacting protein (563 aa).

At Ala-2 the chain carries N-acetylalanine. The 108-residue stretch at 19-126 (VETLRCEGET…KVKKRGISSS (108 aa)) folds into the XRN2-binding (XTBD) domain. Disordered stretches follow at residues 122 to 289 (GISS…LLGS) and 304 to 351 (SSSE…PSLL). Ser-124 bears the Phosphoserine mark. Basic and acidic residues predominate over residues 147–160 (VERDHGKKSAKTDR). Low complexity-rich tracts occupy residues 168 to 216 (SSPS…SSQV) and 234 to 248 (SASFVSSLLKSSMNS). Lys-177 participates in a covalent cross-link: Glycyl lysine isopeptide (Lys-Gly) (interchain with G-Cter in SUMO1). Phosphoserine is present on Ser-234. Over residues 249 to 262 (HMTQSTDNRQQSGS) the composition is skewed to polar residues. Low complexity predominate over residues 270-280 (GSSGSASQSSS). Thr-340 is subject to Phosphothreonine. Phosphoserine is present on Ser-371. Positions 445-520 (NHGELLNAAI…SREALKLFLK (76 aa)) constitute a DRBM domain.

The protein belongs to the CARF family. Interacts with CDKN2A/p14ARF, p53/TP53 and MDM2. Interacts with CHEK2 and MAPK3. Interacts with XRN2. Post-translationally, may be ubiquitinated.

Its subcellular location is the nucleus. The protein resides in the nucleoplasm. Functionally, regulates DNA damage response and cell proliferation in a dose-dependent manner through a number of signaling pathways involved in cell proliferation, apoptosis and senescence. The protein is CDKN2A-interacting protein (Cdkn2aip) of Mus musculus (Mouse).